A 209-amino-acid chain; its full sequence is Uracil phosphoribosyltransferase (209 aa).

5-phospho-alpha-D-ribose 1-diphosphate-binding positions include Arg-79, Arg-104, and 131-139; that span reads DPMLATGGS. Uracil contacts are provided by residues Ile-194 and 199 to 201; that span reads GDA. Asp-200 is a binding site for 5-phospho-alpha-D-ribose 1-diphosphate.

This sequence belongs to the UPRTase family. Mg(2+) is required as a cofactor.

It carries out the reaction UMP + diphosphate = 5-phospho-alpha-D-ribose 1-diphosphate + uracil. It participates in pyrimidine metabolism; UMP biosynthesis via salvage pathway; UMP from uracil: step 1/1. With respect to regulation, allosterically activated by GTP. Catalyzes the conversion of uracil and 5-phospho-alpha-D-ribose 1-diphosphate (PRPP) to UMP and diphosphate. The protein is Uracil phosphoribosyltransferase of Halalkalibacterium halodurans (strain ATCC BAA-125 / DSM 18197 / FERM 7344 / JCM 9153 / C-125) (Bacillus halodurans).